A 724-amino-acid polypeptide reads, in one-letter code: 1,4-alpha-glucan branching enzyme GlgB 1 (724 aa).

The Nucleophile role is filled by D403. E456 (proton donor) is an active-site residue.

This sequence belongs to the glycosyl hydrolase 13 family. GlgB subfamily. As to quaternary structure, monomer.

It carries out the reaction Transfers a segment of a (1-&gt;4)-alpha-D-glucan chain to a primary hydroxy group in a similar glucan chain.. Its pathway is glycan biosynthesis; glycogen biosynthesis. Catalyzes the formation of the alpha-1,6-glucosidic linkages in glycogen by scission of a 1,4-alpha-linked oligosaccharide from growing alpha-1,4-glucan chains and the subsequent attachment of the oligosaccharide to the alpha-1,6 position. The chain is 1,4-alpha-glucan branching enzyme GlgB 1 (glgB1) from Xanthomonas axonopodis pv. citri (strain 306).